Consider the following 546-residue polypeptide: Inosine-5'-monophosphate dehydrogenase (546 aa).

CBS domains lie at 135–197 (FILD…VTAI) and 198–254 (MSTD…PLAS). Residues 292-294 (DSS) and 342-344 (GMG) each bind NAD(+). Residues G344 and G346 each coordinate K(+). S347 contacts IMP. C349 serves as a coordination point for K(+). Catalysis depends on C349, which acts as the Thioimidate intermediate. IMP-binding positions include 382–384 (DGG), 405–406 (GG), and 430–434 (YRGMG). Residue R460 is the Proton acceptor of the active site. Q472 is a binding site for IMP. E531 and G532 together coordinate K(+).

It belongs to the IMPDH/GMPR family. In terms of assembly, homotetramer. Requires K(+) as cofactor.

Its subcellular location is the cytoplasm. The enzyme catalyses IMP + NAD(+) + H2O = XMP + NADH + H(+). It functions in the pathway purine metabolism; XMP biosynthesis via de novo pathway; XMP from IMP: step 1/1. Its activity is regulated as follows. Mycophenolic acid (MPA) is a non-competitive inhibitor that prevents formation of the closed enzyme conformation by binding to the same site as the amobile flap. In contrast, mizoribine monophosphate (MZP) is a competitive inhibitor that induces the closed conformation. MPA is a potent inhibitor of mammalian IMPDHs but a poor inhibitor of the bacterial enzymes. MZP is a more potent inhibitor of bacterial IMPDH. Catalyzes the conversion of inosine 5'-phosphate (IMP) to xanthosine 5'-phosphate (XMP), the first committed and rate-limiting step in the de novo synthesis of guanine nucleotides, and therefore plays an important role in the regulation of cell growth. The protein is Inosine-5'-monophosphate dehydrogenase of Aspergillus fumigatus (strain ATCC MYA-4609 / CBS 101355 / FGSC A1100 / Af293) (Neosartorya fumigata).